The chain runs to 310 residues: Ribosomal RNA small subunit methyltransferase H (310 aa).

S-adenosyl-L-methionine-binding positions include 32–34, aspartate 52, phenylalanine 79, aspartate 100, and glutamine 107; that span reads GGH.

It belongs to the methyltransferase superfamily. RsmH family.

The protein resides in the cytoplasm. It carries out the reaction cytidine(1402) in 16S rRNA + S-adenosyl-L-methionine = N(4)-methylcytidine(1402) in 16S rRNA + S-adenosyl-L-homocysteine + H(+). Functionally, specifically methylates the N4 position of cytidine in position 1402 (C1402) of 16S rRNA. The sequence is that of Ribosomal RNA small subunit methyltransferase H from Bacillus cereus (strain B4264).